The sequence spans 806 residues: Transitional endoplasmic reticulum ATPase (806 aa).

A2 is modified (N-acetylalanine). A phosphoserine mark is found at S3 and S7. A Glycyl lysine isopeptide (Lys-Gly) (interchain with G-Cter in SUMO2) cross-link involves residue K8. Position 13 is a phosphoserine (S13). A Glycyl lysine isopeptide (Lys-Gly) (interchain with G-Cter in SUMO2) cross-link involves residue K18. A Phosphoserine modification is found at S37. 247-253 is an ATP binding site; sequence PGTGKTL. Residue K315 is modified to N6,N6,N6-trimethyllysine; by VCPKMT. ATP is bound by residues N348 and H384. T436 bears the Phosphothreonine mark. S462 is modified (phosphoserine). N6-acetyllysine is present on residues K502 and K505. Residue 521–526 participates in ATP binding; that stretch reads GCGKTL. K668 carries the post-translational modification N6-acetyllysine; alternate. Residue K668 is modified to N6-succinyllysine; alternate. S702 is subject to Phosphoserine. The segment at 708–727 is disordered; the sequence is RRERERQTNPSAMEVEEDDP. At K754 the chain carries N6-acetyllysine. Residues 768–806 are disordered; sequence FGSFRFPSGNQGGAGPSQGSGGGTGGSVYTEDNDDDLYG. S770, S775, and S787 each carry phosphoserine. Over residues 777-793 the composition is skewed to gly residues; it reads NQGGAGPSQGSGGGTGG. An interaction with UBXN6 region spans residues 797-806; that stretch reads TEDNDDDLYG. The PIM motif signature appears at 802-806; that stretch reads DDLYG. Phosphotyrosine is present on Y805.

It belongs to the AAA ATPase family. Homohexamer. Forms a ring-shaped particle of 12.5 nm diameter, that displays 6-fold radial symmetry. Part of a ternary complex containing STX5A, NSFL1C and VCP. NSFL1C forms a homotrimer that binds to one end of a VCP homohexamer. The complex binds to membranes enriched in phosphatidylethanolamine-containing lipids and promotes Golgi membrane fusion. Binds to a heterodimer of NPLOC4 and UFD1, binding to this heterodimer inhibits Golgi-membrane fusion. Interaction with VCIP135 leads to dissociation of the complex via ATP hydrolysis by VCP. Part of a ternary complex containing NPLOC4, UFD1 and VCP. Interacts with NSFL1C-like protein p37; the complex has membrane fusion activity and is required for Golgi and endoplasmic reticulum biogenesis. Interacts with SELENOS and SYVN1, as well as with DERL1 (via SHP-box motif), DERL2 and DERL3; which probably transfer misfolded proteins from the ER to VCP. Interacts with SVIP and forms a complex with SVIP and DERL1. Component of a complex required to couple retrotranslocation, ubiquitination and deglycosylation composed of NGLY1, SAKS1, AMFR, VCP and RAD23B. Part of a complex composed of STUB1/CHIP, VCP/p97, CHRNA3, and UBXN2A that modulates the ubiquitination and endoplasmic reticulum-associated degradation (ERAD) of CHRNA3. Within the complex UBXN2A acts as a scaffold protein required for the interaction of CHRNA3 with VCP/p97, this interaction also inhibits CHRNA3 ubiquitination by STUB1/CHIP and subsequently ERAD. Interacts with UBXN2A (via UBX domain); the interaction is required for the interaction of CHRNA3 in the STUB1-VCP-UBXN2A complex. Directly interacts with UBXN4 and RNF19A. Interacts with CASR. Interacts with UBE4B and YOD1. Interacts with clathrin. Interacts with RNF103. Interacts with TRIM13 and TRIM21. Component of a VCP/p97-AMFR/gp78 complex that participates in the final step of the endoplasmic reticulum-associated degradation (ERAD) of HMGCR. Interacts directly with AMFR/gp78 (via its VIM). Interacts with RHBDD1 (via C-terminal domain). Interacts with SPRTN; leading to recruitment to stalled replication forks. Interacts with WASHC5. Interacts with UBOX5. Interacts (via N-terminus) with UBXN7, UBXN8, and probably several other UBX domain-containing proteins (via UBX domains); the interactions are mutually exclusive with VIM-dependent interactions such as those with AMFR and SELENOS. Forms a complex with UBQLN1 and UBXN4. Interacts (via the PIM motif) with RNF31 (via the PUB domain). Interacts with RIGI and RNF125; interaction takes place when RIGI is ubiquitinated via 'Lys-63'-linked ubiquitin on its CARD domains, leading to recruit RNF125 and promote ubiquitination and degradation of RIGI. Interacts with BAG6. Interacts with UBXN10. Interacts with UBXN6; the interaction with UBXN6 is direct and competitive with UFD1. Forms a ternary complex with CAV1 and UBXN6. Interacts with PLAA, UBXN6 and YOD1; may form a complex involved in macroautophagy. Interacts with ANKZF1. Interacts with ubiquitin-binding protein FAF1. Interacts with ZFAND2B (via VIM motif); the interaction is direct. Interacts with ZFAND1 (via its ubiquitin-like region); this interaction occurs in an arsenite-dependent manner. Interacts with CCDC47. Interacts with UBAC2. Interacts with LMBR1L. Interacts with ATXN3. Interacts with TEX264; bridging VCP to covalent DNA-protein cross-links (DPCs). Interacts with FBXL4. Post-translationally, phosphorylated by tyrosine kinases in response to T-cell antigen receptor activation. Phosphorylated in mitotic cells. In terms of processing, ISGylated. Methylation at Lys-315 catalyzed by VCPKMT is increased in the presence of ASPSCR1. Lys-315 methylation may decrease ATPase activity.

The protein localises to the cytoplasm. It localises to the cytosol. It is found in the endoplasmic reticulum. The protein resides in the nucleus. Its subcellular location is the stress granule. The enzyme catalyses ATP + H2O = ADP + phosphate + H(+). In terms of biological role, necessary for the fragmentation of Golgi stacks during mitosis and for their reassembly after mitosis. Involved in the formation of the transitional endoplasmic reticulum (tER). The transfer of membranes from the endoplasmic reticulum to the Golgi apparatus occurs via 50-70 nm transition vesicles which derive from part-rough, part-smooth transitional elements of the endoplasmic reticulum (tER). Vesicle budding from the tER is an ATP-dependent process. The ternary complex containing UFD1, VCP and NPLOC4 binds ubiquitinated proteins and is necessary for the export of misfolded proteins from the ER to the cytoplasm, where they are degraded by the proteasome. The NPLOC4-UFD1-VCP complex regulates spindle disassembly at the end of mitosis and is necessary for the formation of a closed nuclear envelope. Regulates E3 ubiquitin-protein ligase activity of RNF19A. Component of the VCP/p97-AMFR/gp78 complex that participates in the final step of the sterol-mediated ubiquitination and endoplasmic reticulum-associated degradation (ERAD) of HMGCR. Mediates the endoplasmic reticulum-associated degradation of CHRNA3 in cortical neurons as part of the STUB1-VCP-UBXN2A complex. Involved in endoplasmic reticulum stress-induced pre-emptive quality control, a mechanism that selectively attenuates the translocation of newly synthesized proteins into the endoplasmic reticulum and reroutes them to the cytosol for proteasomal degradation. Involved in clearance process by mediating G3BP1 extraction from stress granules. Also involved in DNA damage response: recruited to double-strand breaks (DSBs) sites in a RNF8- and RNF168-dependent manner and promotes the recruitment of TP53BP1 at DNA damage sites. Recruited to stalled replication forks by SPRTN: may act by mediating extraction of DNA polymerase eta (POLH) to prevent excessive translesion DNA synthesis and limit the incidence of mutations induced by DNA damage. Together with SPRTN metalloprotease, involved in the repair of covalent DNA-protein cross-links (DPCs) during DNA synthesis. Involved in interstrand cross-link repair in response to replication stress by mediating unloading of the ubiquitinated CMG helicase complex. Mediates extraction of PARP1 trapped to chromatin: recognizes and binds ubiquitinated PARP1 and promotes its removal. Required for cytoplasmic retrotranslocation of stressed/damaged mitochondrial outer-membrane proteins and their subsequent proteasomal degradation. Essential for the maturation of ubiquitin-containing autophagosomes and the clearance of ubiquitinated protein by autophagy. Acts as a negative regulator of type I interferon production by interacting with RIGI: interaction takes place when RIGI is ubiquitinated via 'Lys-63'-linked ubiquitin on its CARD domains, leading to recruit RNF125 and promote ubiquitination and degradation of RIGI. May play a role in the ubiquitin-dependent sorting of membrane proteins to lysosomes where they undergo degradation. May more particularly play a role in caveolins sorting in cells. By controlling the steady-state expression of the IGF1R receptor, indirectly regulates the insulin-like growth factor receptor signaling pathway. The protein is Transitional endoplasmic reticulum ATPase (VCP) of Homo sapiens (Human).